The sequence spans 287 residues: UPF0276 protein ACIAD0933 (287 aa).

It belongs to the UPF0276 family.

The chain is UPF0276 protein ACIAD0933 from Acinetobacter baylyi (strain ATCC 33305 / BD413 / ADP1).